We begin with the raw amino-acid sequence, 92 residues long: MSTLKMMLLILLLLLPMATFDSDGQAIPGGGIPSAVNSRVRGDEKSGRSLEKRCRSGKTCPRVGPDECCERSDCFCKMVPARPYWRNKCICL.

The N-terminal stretch at 1 to 20 (MSTLKMMLLILLLLLPMATF) is a signal peptide. Residues 21–53 (DSDGQAIPGGGIPSAVNSRVRGDEKSGRSLEKR) constitute a propeptide that is removed on maturation.

It belongs to the conotoxin N superfamily. Contains 4 disulfide bonds. In terms of tissue distribution, expressed by the venom duct.

It is found in the secreted. This chain is Conotoxin Mr15.3, found in Conus marmoreus (Marble cone).